A 296-amino-acid polypeptide reads, in one-letter code: D-alanine--D-alanine ligase (296 aa).

Positions 103 to 293 (KEILMHHRMP…FDSFVKRIIE (191 aa)) constitute an ATP-grasp domain. 129–180 (ISFPAAVKPSSGGSSIATFKVKSIQELKHAYEEASKYGEVMIEQWVTGKEIT) is an ATP binding site. Mg(2+) is bound by residues aspartate 247, glutamate 260, and asparagine 262.

It belongs to the D-alanine--D-alanine ligase family. Mg(2+) is required as a cofactor. Requires Mn(2+) as cofactor.

The protein resides in the cytoplasm. It carries out the reaction 2 D-alanine + ATP = D-alanyl-D-alanine + ADP + phosphate + H(+). Its pathway is cell wall biogenesis; peptidoglycan biosynthesis. Functionally, cell wall formation. The polypeptide is D-alanine--D-alanine ligase (Francisella tularensis subsp. holarctica (strain LVS)).